The primary structure comprises 103 residues: Cell division protein CrgA (103 aa).

Transmembrane regions (helical) follow at residues 49 to 69 and 80 to 100; these read FVPL…VYYL and IGAW…LMTM.

The protein belongs to the CrgA family.

The protein localises to the cell membrane. Its function is as follows. Involved in cell division. This is Cell division protein CrgA from Bifidobacterium longum (strain NCC 2705).